The sequence spans 310 residues: Cytosolic Fe-S cluster assembly factor Nubp1 homolog (310 aa).

Residues cysteine 8, cysteine 22, cysteine 25, and cysteine 31 each coordinate [4Fe-4S] cluster. Residue 62 to 69 (GKGGVGKS) coordinates ATP. Residues cysteine 239 and cysteine 242 each coordinate [4Fe-4S] cluster.

The protein belongs to the Mrp/NBP35 ATP-binding proteins family. NUBP1/NBP35 subfamily. Heterotetramer of 2 Nubp1 and 2 Nubp2 chains. Requires [4Fe-4S] cluster as cofactor.

Its subcellular location is the cytoplasm. Functionally, component of the cytosolic iron-sulfur (Fe/S) protein assembly (CIA) machinery. Required for maturation of extramitochondrial Fe-S proteins. The Nubp1-Nubp2 heterotetramer forms a Fe-S scaffold complex, mediating the de novo assembly of an Fe-S cluster and its transfer to target apoproteins. This chain is Cytosolic Fe-S cluster assembly factor Nubp1 homolog, found in Drosophila ananassae (Fruit fly).